The following is a 364-amino-acid chain: Chorismate synthase (364 aa).

Arg48 and Arg54 together coordinate NADP(+). Residues 125–127 (RSS), 238–239 (NA), Gly278, 293–297 (KPTSS), and Arg319 contribute to the FMN site.

Belongs to the chorismate synthase family. Homotetramer. Requires FMNH2 as cofactor.

It catalyses the reaction 5-O-(1-carboxyvinyl)-3-phosphoshikimate = chorismate + phosphate. The protein operates within metabolic intermediate biosynthesis; chorismate biosynthesis; chorismate from D-erythrose 4-phosphate and phosphoenolpyruvate: step 7/7. Its function is as follows. Catalyzes the anti-1,4-elimination of the C-3 phosphate and the C-6 proR hydrogen from 5-enolpyruvylshikimate-3-phosphate (EPSP) to yield chorismate, which is the branch point compound that serves as the starting substrate for the three terminal pathways of aromatic amino acid biosynthesis. This reaction introduces a second double bond into the aromatic ring system. This chain is Chorismate synthase, found in Shewanella frigidimarina (strain NCIMB 400).